Reading from the N-terminus, the 118-residue chain is uncharacterized protein (118 aa).

This is an uncharacterized protein from Escherichia coli (strain UTI89 / UPEC).